Reading from the N-terminus, the 232-residue chain is Nuclear transcription factor Y subunit nfyc-1 (232 aa).

Residues 191 to 232 (TVPTTSTNGPGHMSEDSFQDPNMHSDFHQRTSNSSVNRSHHN) are disordered. Positions 220-232 (RTSNSSVNRSHHN) are enriched in polar residues.

This sequence belongs to the NFYC/HAP5 subunit family. In terms of assembly, forms two NF-Y heterotrimeric transcription factor complexes: the nfya-1-NF-Y complex is composed of nfya-1, nfyb-1 and nfyc-1, and the nfya-2-NF-Y complex is composed of nfya-2, nfyb-1 and nfyc-1. Interacts with nfyb-1; the interaction is direct and is required for the interaction with either nfya-1 or nfya-2, and subsequent binding of the complex to the 5'-CCAAT-3' box motif in DNA. Expressed in certain parts of the gonads with high expression in fertilized oocytes in the uterus and mature oocytes from the distal to the proximal arm of the gonad, but weak expression in the syncytial ovaries and immature oocytes at the beginning of the proximal arm of the gonad. Expressed in the excretory cell, secretory cells in the pharyngeal terminal bulb wall, in the small ganglia surrounding the pharynx and in the neurons running anteriorly to the sensory organs in the head. Not expressed in the intestine, the hypodermis or body wall muscle surrounding the pseudocoelomic space.

It localises to the nucleus. The protein resides in the cytoplasm. The protein localises to the perikaryon. Its function is as follows. Component of sequence-specific heterotrimeric transcription factor (nfya-1-NF-Y and nfya-2-NF-Y) complexes which specifically recognize a 5'-CCAAT-3' box motif found in the promoters of its target genes to regulate their expression and control cellular identity in particular tissue types. In association with the components in the NF-Y complexes, represses the expression of the T-box transcription factor tbx-2 throughout larval development, which most likely restricts its expression to certain tissues. May act to repress txb-2 expression in conjunction with tbx-2 itself, which has an autoregulatory role. In association with the components in the nfya-1-NF-Y complex, negatively regulates the expression of the homeobox protein egl-5 to spatially restrict its expression in tissues such as the head. May regulate egl-5 expression in association with the mes-2-mes-3-mes-6 complex. This chain is Nuclear transcription factor Y subunit nfyc-1, found in Caenorhabditis elegans.